We begin with the raw amino-acid sequence, 230 residues long: 5'-methylthioadenosine/S-adenosylhomocysteine nucleosidase (230 aa).

Glu-12 acts as the Proton acceptor in catalysis. Residues Gly-78, Ile-152, and 173 to 174 (ME) each bind substrate. Asp-197 (proton donor) is an active-site residue.

It belongs to the PNP/UDP phosphorylase family. MtnN subfamily.

The enzyme catalyses S-adenosyl-L-homocysteine + H2O = S-(5-deoxy-D-ribos-5-yl)-L-homocysteine + adenine. It carries out the reaction S-methyl-5'-thioadenosine + H2O = 5-(methylsulfanyl)-D-ribose + adenine. The catalysed reaction is 5'-deoxyadenosine + H2O = 5-deoxy-D-ribose + adenine. Its pathway is amino-acid biosynthesis; L-methionine biosynthesis via salvage pathway; S-methyl-5-thio-alpha-D-ribose 1-phosphate from S-methyl-5'-thioadenosine (hydrolase route): step 1/2. Functionally, catalyzes the irreversible cleavage of the glycosidic bond in both 5'-methylthioadenosine (MTA) and S-adenosylhomocysteine (SAH/AdoHcy) to adenine and the corresponding thioribose, 5'-methylthioribose and S-ribosylhomocysteine, respectively. Also cleaves 5'-deoxyadenosine, a toxic by-product of radical S-adenosylmethionine (SAM) enzymes, into 5-deoxyribose and adenine. This is 5'-methylthioadenosine/S-adenosylhomocysteine nucleosidase from Haemophilus influenzae (strain 86-028NP).